Reading from the N-terminus, the 274-residue chain is Thiamine kinase (274 aa).

It belongs to the thiamine kinase family.

The enzyme catalyses thiamine + ATP = thiamine phosphate + ADP + H(+). It functions in the pathway cofactor biosynthesis; thiamine diphosphate biosynthesis; thiamine phosphate from thiamine: step 1/1. Catalyzes the ATP-dependent phosphorylation of thiamine to thiamine phosphate. Is involved in thiamine salvage. This is Thiamine kinase from Escherichia coli O139:H28 (strain E24377A / ETEC).